The chain runs to 1007 residues: SUPPRESSOR OF ABI3-5 (1007 aa).

Disordered regions lie at residues 1-185 and 204-269; these read MDPS…RDRE and ESPH…FSAT. Basic and acidic residues-rich tracts occupy residues 40–49, 94–120, 138–185, and 204–214; these read PDERLMRDDV, YYHD…RYDG, HSRD…RDRE, and ESPHKRYEKSR. Residues 227 to 236 are compositionally biased toward basic residues; that stretch reads RSPRGRSHGR. Residues 237 to 264 are compositionally biased toward basic and acidic residues; sequence SYREDSYEGDHWNESERRREYEDRHNQD. Residues 272 to 352 enclose the RRM 1 domain; sequence ATVVVKGLSM…RKLMFHYSQP (81 aa). A RanBP2-type zinc finger spans residues 378 to 407; the sequence is VPTDWICTICGCINFARRTSCFQCNEPKTK. In terms of domain architecture, RRM 2 spans 432–512; that stretch reads HVLVVRGLDE…KILRVAYAKS (81 aa). Disordered regions lie at residues 556 to 581, 631 to 656, 725 to 755, 771 to 797, 810 to 910, and 945 to 977; these read GEKQ…SAPQ, PDQN…SQQK, HETQ…STGQ, STSN…TLMG, ASSS…GITT, and SGLG…KKVD. Positions 631–645 are enriched in polar residues; sequence PDQNNESKVTENQPD. Composition is skewed to low complexity over residues 778-793 and 823-835; these read SALT…TTGG and PSAS…VSGS. Positions 849–867 are enriched in basic and acidic residues; sequence THREQPQTSYRDRAAERRN. Residues 928 to 974 form the G-patch domain; the sequence is ESNVGNRMLRNMGWHEGSGLGKDGSGMKEPVQAQGVDRRAGLGSQQK.

Interacts with the pre-spliceosomal component U2AF65A. As to expression, ubiquitous with highest expression in siliques toward the end of seed maturation.

It is found in the nucleus. Functionally, splicing factor that controls alternative splicing of the developmental regulator ABI3. Reduces splicing of a cryptic intron in ABI3, leading to a decreased in ABI3-beta transcript. Regulates the splicing of the receptor-like kinase SNC4/LRKL-2.6. This Arabidopsis thaliana (Mouse-ear cress) protein is SUPPRESSOR OF ABI3-5.